The primary structure comprises 53 residues: MFRWGIIFLVIALIAAALGFGGLAGTAAGAAKIVFVVGIVLFLVSLFMGRKRP.

Transmembrane regions (helical) follow at residues 4-24 (WGII…GGLA) and 30-48 (AAKI…SLFM).

This sequence belongs to the UPF0391 family.

Its subcellular location is the cell membrane. This chain is UPF0391 membrane protein YtjA, found in Salmonella agona (strain SL483).